A 157-amino-acid polypeptide reads, in one-letter code: UPF0178 protein Nwi_2152 (157 aa).

The protein belongs to the UPF0178 family.

The chain is UPF0178 protein Nwi_2152 from Nitrobacter winogradskyi (strain ATCC 25391 / DSM 10237 / CIP 104748 / NCIMB 11846 / Nb-255).